Reading from the N-terminus, the 242-residue chain is Transcriptional activator protein BjaR1 (242 aa).

The HTH luxR-type domain occupies 173–238; it reads TPYPSTRLTP…HAVALAIRHK (66 aa). Positions 197 to 216 form a DNA-binding region, H-T-H motif; it reads AWEIGEILHITQRTAEEHLA.

This sequence belongs to the autoinducer-regulated transcriptional regulatory protein family.

In terms of biological role, transcriptional activator that functions in response to the quorum-sensing autoinducer IV-HSL (isovaleryl-homoserine lactone). Activates BjaI expression. Is sensitive to IV-HSL at concentrations as low as 10 pM. The protein is Transcriptional activator protein BjaR1 (bjaR1) of Bradyrhizobium diazoefficiens (strain JCM 10833 / BCRC 13528 / IAM 13628 / NBRC 14792 / USDA 110).